The primary structure comprises 470 residues: ATP synthase subunit beta (470 aa).

151 to 158 (GGAGVGKT) serves as a coordination point for ATP.

The protein belongs to the ATPase alpha/beta chains family. F-type ATPases have 2 components, CF(1) - the catalytic core - and CF(0) - the membrane proton channel. CF(1) has five subunits: alpha(3), beta(3), gamma(1), delta(1), epsilon(1). CF(0) has three main subunits: a(1), b(2) and c(9-12). The alpha and beta chains form an alternating ring which encloses part of the gamma chain. CF(1) is attached to CF(0) by a central stalk formed by the gamma and epsilon chains, while a peripheral stalk is formed by the delta and b chains.

The protein resides in the cell membrane. The enzyme catalyses ATP + H2O + 4 H(+)(in) = ADP + phosphate + 5 H(+)(out). Functionally, produces ATP from ADP in the presence of a proton gradient across the membrane. The catalytic sites are hosted primarily by the beta subunits. The protein is ATP synthase subunit beta of Mycoplasma mobile (strain ATCC 43663 / 163K / NCTC 11711) (Mesomycoplasma mobile).